Consider the following 28-residue polypeptide: Ranatuerin-2B (28 aa).

Cys23 and Cys28 form a disulfide bridge.

As to expression, expressed by the skin glands.

The protein resides in the secreted. Antibacterial activity against Gram-positive bacterium S.aureus and Gram-negative bacterium E.coli. Has activity against C.albicans. This chain is Ranatuerin-2B, found in Lithobates berlandieri (Rio Grande leopard frog).